We begin with the raw amino-acid sequence, 526 residues long: D-arabinono-1,4-lactone oxidase (526 aa).

The region spanning 22–196 (FWSRPSLYFQ…VYATLRTVPA (175 aa)) is the FAD-binding PCMH-type domain. His-59 carries the post-translational modification Pros-8alpha-FAD histidine.

Belongs to the oxygen-dependent FAD-linked oxidoreductase family. It depends on FAD as a cofactor.

The protein resides in the mitochondrion membrane. It catalyses the reaction D-arabinono-1,4-lactone + O2 = dehydro-D-arabinono-1,4-lactone + H2O2 + H(+). It functions in the pathway cofactor biosynthesis; D-erythroascorbate biosynthesis; dehydro-D-arabinono-1,4-lactone from D-arabinose: step 2/2. The protein is D-arabinono-1,4-lactone oxidase (ALO1) of Yarrowia lipolytica (strain CLIB 122 / E 150) (Yeast).